The sequence spans 595 residues: Phytoene desaturase (595 aa).

The signal sequence occupies residues 1-23; it reads MAETQRPRSAIIVGAGAGGIAVA. Residues 574-594 form a helical membrane-spanning segment; that stretch reads SQRAFPLLVALMGVLYFLLFV.

The protein belongs to the carotenoid/retinoid oxidoreductase family. Requires NAD(+) as cofactor.

It is found in the membrane. It catalyses the reaction 15-cis-phytoene + A = all-trans-phytofluene + AH2. The enzyme catalyses all-trans-phytofluene + A = all-trans-zeta-carotene + AH2. It carries out the reaction all-trans-zeta-carotene + A = all-trans-neurosporene + AH2. The catalysed reaction is all-trans-neurosporene + A = all-trans-lycopene + AH2. It catalyses the reaction all-trans-lycopene + A = all-trans-3,4-didehydrolycopene + AH2. Its pathway is carotenoid biosynthesis; lycopene biosynthesis. Functionally, phytoene desaturase involved in the carotenoid biosynthesis pathway. Converts phytoene into 3,4-didehydrolycopene via the intermediates phytofluene, zeta-carotene, neurosporene and lycopene, by introducing up to five double bonds into phytoene. Is also able to desaturate 1-hydroxyneurosporene into 1-hydroxylycopene and 1-hydroxylycopene into 1-hydroxy-3,4-didehydrolycopene. Gamma-carotene and 1,19-dihydroxylycopene are not accepted as substrates. Neurosporaxanthin is synthesized from geranyl-geranyl pyrophosphate (GGPP) through several enzymatic activities. Phytoene synthase activity performed by the bifunctional enzyme al-2 first produces phytoene from geranyl-geranyl pyrophosphate (GGPP). The phytoene dehydrogenase al-1 then introduces 5 desaturations to lead to 3,4-didehydrolycopene via the intermediates phytofluene, zeta-carotene, neurosporene and lycopene. Al-2 cyclase activity then converts 3,4-didehydrolycopene into torulene. Al-2 can also convet lycopene into gamma-carotene which in turn is converted to beta-carotene by an additional al-2 cyclization reaction. Torulene is the substrate of the dioxidase cao-2 that breaks the molecule, removing five carbon atoms to yield beta-apo-4'-carotenal, whereas the aldehyde dehydrogenase ylo-1 mediates the last step by converting beta-apo-4'-carotenal into neurosporaxanthin. The sequence is that of Phytoene desaturase from Neurospora crassa (strain ATCC 24698 / 74-OR23-1A / CBS 708.71 / DSM 1257 / FGSC 987).